The chain runs to 524 residues: Metal transporter Nramp2 (524 aa).

The disordered stretch occupies residues 34-58; it reads AYDSDDKVSIAVSDSDSEDGGGGGG. 12 helical membrane-spanning segments follow: residues 70–90, 98–118, 155–175, 179–199, 207–227, 253–273, 295–315, 341–361, 389–409, 420–440, 457–477, and 486–506; these read LWRF…PGNL, AAAG…GALV, LALV…IKIL, TVPL…FLFL, LEAF…IMFG, AVGI…SALV, IESI…TTVF, YGTA…ASGQ, AMIT…FFDT, ALNV…ITLV, VISW…ILSF, and LVRS…VYLI.

Belongs to the NRAMP (TC 2.A.55) family.

It localises to the membrane. Functionally, probable metal transporter. The chain is Metal transporter Nramp2 (NRAMP2) from Oryza sativa subsp. japonica (Rice).